Here is a 372-residue protein sequence, read N- to C-terminus: Aminomethyltransferase (372 aa).

This sequence belongs to the GcvT family. As to quaternary structure, the glycine cleavage system is composed of four proteins: P, T, L and H.

The catalysed reaction is N(6)-[(R)-S(8)-aminomethyldihydrolipoyl]-L-lysyl-[protein] + (6S)-5,6,7,8-tetrahydrofolate = N(6)-[(R)-dihydrolipoyl]-L-lysyl-[protein] + (6R)-5,10-methylene-5,6,7,8-tetrahydrofolate + NH4(+). The glycine cleavage system catalyzes the degradation of glycine. This is Aminomethyltransferase from Burkholderia orbicola (strain MC0-3).